A 364-amino-acid chain; its full sequence is F-box protein At1g59680 (364 aa).

The F-box domain occupies 2 to 49; it reads TTMSDLSVDLVGEILSRVPLTSLSAVRCTCKSWNTLSKHQIFGKAELA.

The polypeptide is F-box protein At1g59680 (Arabidopsis thaliana (Mouse-ear cress)).